A 975-amino-acid polypeptide reads, in one-letter code: Nesprin-3 (975 aa).

Topologically, residues Met-1–Cys-925 are cytoplasmic. One copy of the Spectrin 1 repeat lies at Arg-220 to Gly-325. Positions Asn-617 to Gln-645 form a coiled coil. The Spectrin 2 repeat unit spans residues Val-647–Leu-740. One can recognise a KASH domain in the interval Gly-917 to Thr-975. A helical; Anchor for type IV membrane protein transmembrane segment spans residues Val-926–Ile-946. Topologically, residues Arg-947–Thr-975 are perinuclear space.

It belongs to the nesprin family. In terms of assembly, core component of LINC complexes which are composed of inner nuclear membrane SUN domain-containing proteins coupled to outer nuclear membrane KASH domain-containing nesprins. SUN and KASH domain-containing proteins seem to bind each other promiscuously; however, differentially expression of LINC complex constituents can give rise to specific assemblies. Interacts with SUN1 and SUN2; probably forming respective LINC complexes. Interacts with PLEC (via actin-binding domain). Interacts with DST. Interacts with SYNE1 via spectrin repeats. Interacts (via KASH domain) with TOR1A (ATP-bound); the interaction is required for SYNE3 nuclear envelope localization. The disulfid bond with SUN1 or SUN2 is required for stability of the respective LINC complex under tensile forces. Expressed in aortic endothelial cells (at protein level).

It localises to the nucleus outer membrane. It is found in the nucleus envelope. The protein localises to the rough endoplasmic reticulum. As a component of the LINC (LInker of Nucleoskeleton and Cytoskeleton) complex involved in the connection between the nuclear lamina and the cytoskeleton. The nucleocytoplasmic interactions established by the LINC complex play an important role in the transmission of mechanical forces across the nuclear envelope and in nuclear movement and positioning. Probable anchoring protein which tethers the nucleus to the cytoskeleton by binding PLEC which can associate with the intermediate filament system. Plays a role in the regulation of aortic epithelial cell morphology, and is required for flow-induced centrosome polarization and directional migration in aortic endothelial cells. This chain is Nesprin-3, found in Homo sapiens (Human).